Reading from the N-terminus, the 344-residue chain is 4'-phosphopantetheinyl transferase NpgA (344 aa).

The protein belongs to the P-Pant transferase superfamily.

The enzyme catalyses apo-[ACP] + CoA = holo-[ACP] + adenosine 3',5'-bisphosphate + H(+). Functionally, transfers the 4'-phosphopantetheine moiety from coenzyme A to a Ser of an acyl-carrier-protein. The enzyme is able to transfer the cofactor to a broad range of enzymes with acyl- or peptidyl-carrier protein domains. Required for primary biological processes such as growth and asexual/sexual development, and activates target enzymes involved in the synthesis of metabolites such as fatty acids, polyketides and nonribosomal peptides, lysine, siderophore, penicillin, sterigmatocystin, shamixantone, dehydroaustinol, and pigments. This is 4'-phosphopantetheinyl transferase NpgA (npgA) from Emericella nidulans (strain FGSC A4 / ATCC 38163 / CBS 112.46 / NRRL 194 / M139) (Aspergillus nidulans).